A 308-amino-acid polypeptide reads, in one-letter code: Ribosomal RNA small subunit methyltransferase H (308 aa).

Residues 36–38 (GGH), D55, F86, D103, and Q110 contribute to the S-adenosyl-L-methionine site.

Belongs to the methyltransferase superfamily. RsmH family.

It localises to the cytoplasm. The enzyme catalyses cytidine(1402) in 16S rRNA + S-adenosyl-L-methionine = N(4)-methylcytidine(1402) in 16S rRNA + S-adenosyl-L-homocysteine + H(+). Specifically methylates the N4 position of cytidine in position 1402 (C1402) of 16S rRNA. This chain is Ribosomal RNA small subunit methyltransferase H, found in Helicobacter pylori (strain G27).